A 216-amino-acid chain; its full sequence is Ribosomal RNA small subunit methyltransferase G (216 aa).

S-adenosyl-L-methionine-binding residues include Gly-75, Leu-80, and Arg-141.

Belongs to the methyltransferase superfamily. RNA methyltransferase RsmG family.

The protein resides in the cytoplasm. The enzyme catalyses guanosine(527) in 16S rRNA + S-adenosyl-L-methionine = N(7)-methylguanosine(527) in 16S rRNA + S-adenosyl-L-homocysteine. Specifically methylates the N7 position of guanine in position 527 of 16S rRNA. The polypeptide is Ribosomal RNA small subunit methyltransferase G (Nitrosospira multiformis (strain ATCC 25196 / NCIMB 11849 / C 71)).